Consider the following 729-residue polypeptide: Fatty acid oxidation complex subunit alpha (729 aa).

The tract at residues 1–189 (MLYKGDTLYV…KIGLIDGIVK (189 aa)) is enoyl-CoA hydratase/isomerase. A substrate-binding site is contributed by Asp296. Residues 311-729 (EMPKQAAVLG…ARPVGALKTA (419 aa)) are 3-hydroxyacyl-CoA dehydrogenase. NAD(+)-binding positions include Met324, Asp343, 400 to 402 (VVE), Lys407, and Ser429. The active-site For 3-hydroxyacyl-CoA dehydrogenase activity is the His450. Asn453 lines the NAD(+) pocket. Substrate contacts are provided by Asn500 and Tyr660. Residues 708-729 (RHNEPYYPPVEPARPVGALKTA) form a disordered region.

The protein in the N-terminal section; belongs to the enoyl-CoA hydratase/isomerase family. In the C-terminal section; belongs to the 3-hydroxyacyl-CoA dehydrogenase family. Heterotetramer of two alpha chains (FadB) and two beta chains (FadA).

It carries out the reaction a (3S)-3-hydroxyacyl-CoA + NAD(+) = a 3-oxoacyl-CoA + NADH + H(+). It catalyses the reaction a (3S)-3-hydroxyacyl-CoA = a (2E)-enoyl-CoA + H2O. The enzyme catalyses a 4-saturated-(3S)-3-hydroxyacyl-CoA = a (3E)-enoyl-CoA + H2O. The catalysed reaction is (3S)-3-hydroxybutanoyl-CoA = (3R)-3-hydroxybutanoyl-CoA. It carries out the reaction a (3Z)-enoyl-CoA = a 4-saturated (2E)-enoyl-CoA. It catalyses the reaction a (3E)-enoyl-CoA = a 4-saturated (2E)-enoyl-CoA. It participates in lipid metabolism; fatty acid beta-oxidation. Functionally, involved in the aerobic and anaerobic degradation of long-chain fatty acids via beta-oxidation cycle. Catalyzes the formation of 3-oxoacyl-CoA from enoyl-CoA via L-3-hydroxyacyl-CoA. It can also use D-3-hydroxyacyl-CoA and cis-3-enoyl-CoA as substrate. The protein is Fatty acid oxidation complex subunit alpha of Enterobacter sp. (strain 638).